A 449-amino-acid chain; its full sequence is Glutamate--tRNA ligase 2 (449 aa).

Positions 11–21 match the 'HIGH' region motif; it reads PSPTGFLHIGN. The 'KMSKS' region signature appears at 242-246; that stretch reads GLSKR. Lys-245 lines the ATP pocket.

It belongs to the class-I aminoacyl-tRNA synthetase family. Glutamate--tRNA ligase type 1 subfamily. Monomer.

Its subcellular location is the cytoplasm. The catalysed reaction is tRNA(Glu) + L-glutamate + ATP = L-glutamyl-tRNA(Glu) + AMP + diphosphate. Functionally, catalyzes the attachment of glutamate to tRNA(Glu) in a two-step reaction: glutamate is first activated by ATP to form Glu-AMP and then transferred to the acceptor end of tRNA(Glu). The chain is Glutamate--tRNA ligase 2 from Methylorubrum populi (strain ATCC BAA-705 / NCIMB 13946 / BJ001) (Methylobacterium populi).